Here is a 438-residue protein sequence, read N- to C-terminus: Glutamyl-tRNA reductase (438 aa).

Residues 55–58, Ser-118, 123–125, and Gln-129 contribute to the substrate site; these read TCNR and ETQ. The active-site Nucleophile is Cys-56. 198 to 203 contacts NADP(+); sequence GAGDMI.

It belongs to the glutamyl-tRNA reductase family. As to quaternary structure, homodimer.

It catalyses the reaction (S)-4-amino-5-oxopentanoate + tRNA(Glu) + NADP(+) = L-glutamyl-tRNA(Glu) + NADPH + H(+). It participates in porphyrin-containing compound metabolism; protoporphyrin-IX biosynthesis; 5-aminolevulinate from L-glutamyl-tRNA(Glu): step 1/2. Its function is as follows. Catalyzes the NADPH-dependent reduction of glutamyl-tRNA(Glu) to glutamate 1-semialdehyde (GSA). The sequence is that of Glutamyl-tRNA reductase from Polynucleobacter asymbioticus (strain DSM 18221 / CIP 109841 / QLW-P1DMWA-1) (Polynucleobacter necessarius subsp. asymbioticus).